The following is an 81-amino-acid chain: Small ribosomal subunit protein bS16 (81 aa).

This sequence belongs to the bacterial ribosomal protein bS16 family.

The sequence is that of Small ribosomal subunit protein bS16 from Nautilia profundicola (strain ATCC BAA-1463 / DSM 18972 / AmH).